The following is a 276-amino-acid chain: Anthranilate synthase beta subunit 1, chloroplastic (276 aa).

Residues 1 to 50 constitute a chloroplast transit peptide; sequence MAASTLYKSCLLQPKSGSTTRRLNPSLVNPLTNPTRVSVLGKSRRDVFAK. In terms of domain architecture, Glutamine amidotransferase type-1 spans 74 to 273; that stretch reads PIIVIDNYDS…IKIVEKKESE (200 aa). Catalysis depends on Cys152, which acts as the Nucleophile. Active-site residues include His247 and Glu249.

Heterotetramer consisting of two non-identical subunits: a beta subunit and a large alpha subunit. Expressed in the central cylinder of mature primary root zones, including pericycle and early lateral root primordia, and vasculature of cotyledons.

It is found in the plastid. It localises to the chloroplast. It carries out the reaction chorismate + L-glutamine = anthranilate + pyruvate + L-glutamate + H(+). Its pathway is amino-acid biosynthesis; L-tryptophan biosynthesis; L-tryptophan from chorismate: step 1/5. Part of a heterotetrameric complex that catalyzes the two-step biosynthesis of anthranilate, an intermediate in the biosynthesis of L-tryptophan. In the first step, the glutamine-binding beta subunit of anthranilate synthase (AS) provides the glutamine amidotransferase activity which generates ammonia as a substrate that, along with chorismate, is used in the second step, catalyzed by the large alpha subunit of AS to produce anthranilate. Plays an important regulatory role in auxin production via the tryptophan-dependent biosynthetic pathway. This chain is Anthranilate synthase beta subunit 1, chloroplastic (ASB1), found in Arabidopsis thaliana (Mouse-ear cress).